The primary structure comprises 359 residues: Probable dual-specificity RNA methyltransferase RlmN (359 aa).

E91 (proton acceptor) is an active-site residue. Residues Q97–R329 form the Radical SAM core domain. A disulfide bridge links C104 with C340. [4Fe-4S] cluster contacts are provided by C111, C115, and C118. S-adenosyl-L-methionine contacts are provided by residues G163–E164, S195, S218–H220, and N296. Residue C340 is the S-methylcysteine intermediate of the active site.

This sequence belongs to the radical SAM superfamily. RlmN family. The cofactor is [4Fe-4S] cluster.

Its subcellular location is the cytoplasm. It catalyses the reaction adenosine(2503) in 23S rRNA + 2 reduced [2Fe-2S]-[ferredoxin] + 2 S-adenosyl-L-methionine = 2-methyladenosine(2503) in 23S rRNA + 5'-deoxyadenosine + L-methionine + 2 oxidized [2Fe-2S]-[ferredoxin] + S-adenosyl-L-homocysteine. The enzyme catalyses adenosine(37) in tRNA + 2 reduced [2Fe-2S]-[ferredoxin] + 2 S-adenosyl-L-methionine = 2-methyladenosine(37) in tRNA + 5'-deoxyadenosine + L-methionine + 2 oxidized [2Fe-2S]-[ferredoxin] + S-adenosyl-L-homocysteine. In terms of biological role, specifically methylates position 2 of adenine 2503 in 23S rRNA and position 2 of adenine 37 in tRNAs. The polypeptide is Probable dual-specificity RNA methyltransferase RlmN (Streptococcus pyogenes serotype M2 (strain MGAS10270)).